We begin with the raw amino-acid sequence, 677 residues long: Methionine--tRNA ligase (677 aa).

Residues 15 to 25 (PYANGSIHLGH) carry the 'HIGH' region motif. Zn(2+) is bound by residues Cys146, Cys149, Cys159, and Cys162. The short motif at 333–337 (KMSKS) is the 'KMSKS' region element. Position 336 (Lys336) interacts with ATP. A tRNA-binding domain is found at 575–677 (DFAKIDLRVA…DGAKPGQQVK (103 aa)).

This sequence belongs to the class-I aminoacyl-tRNA synthetase family. MetG type 1 subfamily. In terms of assembly, homodimer. The cofactor is Zn(2+).

Its subcellular location is the cytoplasm. The catalysed reaction is tRNA(Met) + L-methionine + ATP = L-methionyl-tRNA(Met) + AMP + diphosphate. Functionally, is required not only for elongation of protein synthesis but also for the initiation of all mRNA translation through initiator tRNA(fMet) aminoacylation. This chain is Methionine--tRNA ligase, found in Salmonella typhimurium (strain LT2 / SGSC1412 / ATCC 700720).